The following is a 308-amino-acid chain: Porphobilinogen deaminase (308 aa).

Position 240 is an S-(dipyrrolylmethanemethyl)cysteine (Cys240).

Belongs to the HMBS family. As to quaternary structure, monomer. Requires dipyrromethane as cofactor.

It catalyses the reaction 4 porphobilinogen + H2O = hydroxymethylbilane + 4 NH4(+). It participates in porphyrin-containing compound metabolism; protoporphyrin-IX biosynthesis; coproporphyrinogen-III from 5-aminolevulinate: step 2/4. Tetrapolymerization of the monopyrrole PBG into the hydroxymethylbilane pre-uroporphyrinogen in several discrete steps. The protein is Porphobilinogen deaminase of Campylobacter lari (strain RM2100 / D67 / ATCC BAA-1060).